The following is a 126-amino-acid chain: Protein ApaG (126 aa).

The region spanning 2–126 (SDPRYQIDVS…FRLAVPGALH (125 aa)) is the ApaG domain.

This Azotobacter vinelandii (strain DJ / ATCC BAA-1303) protein is Protein ApaG.